A 319-amino-acid polypeptide reads, in one-letter code: Acetyl-coenzyme A carboxylase carboxyl transferase subunit alpha (319 aa).

Residues 35-296 (NIDEEVHRLR…KAQLLADLAD (262 aa)) form the CoA carboxyltransferase C-terminal domain.

It belongs to the AccA family. As to quaternary structure, acetyl-CoA carboxylase is a heterohexamer composed of biotin carboxyl carrier protein (AccB), biotin carboxylase (AccC) and two subunits each of ACCase subunit alpha (AccA) and ACCase subunit beta (AccD).

The protein localises to the cytoplasm. The enzyme catalyses N(6)-carboxybiotinyl-L-lysyl-[protein] + acetyl-CoA = N(6)-biotinyl-L-lysyl-[protein] + malonyl-CoA. The protein operates within lipid metabolism; malonyl-CoA biosynthesis; malonyl-CoA from acetyl-CoA: step 1/1. Component of the acetyl coenzyme A carboxylase (ACC) complex. First, biotin carboxylase catalyzes the carboxylation of biotin on its carrier protein (BCCP) and then the CO(2) group is transferred by the carboxyltransferase to acetyl-CoA to form malonyl-CoA. The chain is Acetyl-coenzyme A carboxylase carboxyl transferase subunit alpha from Shigella boydii serotype 4 (strain Sb227).